Consider the following 408-residue polypeptide: Peptidase T (408 aa).

His-78 is a Zn(2+) binding site. Asp-80 is an active-site residue. Asp-140 provides a ligand contact to Zn(2+). Glu-174 functions as the Proton acceptor in the catalytic mechanism. 3 residues coordinate Zn(2+): Glu-175, Asp-197, and His-379.

This sequence belongs to the peptidase M20B family. It depends on Zn(2+) as a cofactor.

The protein resides in the cytoplasm. The catalysed reaction is Release of the N-terminal residue from a tripeptide.. Cleaves the N-terminal amino acid of tripeptides. The polypeptide is Peptidase T (Staphylococcus aureus (strain Mu3 / ATCC 700698)).